Here is a 75-residue protein sequence, read N- to C-terminus: UPF0291 protein LMOf2365_1322 (75 aa).

The disordered stretch occupies residues 56 to 75 (DPNGTDVTPHKVKQLRKNKH). A compositionally biased stretch (basic residues) spans 65 to 75 (HKVKQLRKNKH).

Belongs to the UPF0291 family.

It localises to the cytoplasm. The polypeptide is UPF0291 protein LMOf2365_1322 (Listeria monocytogenes serotype 4b (strain F2365)).